We begin with the raw amino-acid sequence, 289 residues long: Oxygen-dependent coproporphyrinogen-III oxidase (289 aa).

Residue Ser-82 coordinates substrate. A divalent metal cation contacts are provided by His-86 and His-96. The active-site Proton donor is His-96. 98-100 contacts substrate; sequence NYR. 2 residues coordinate a divalent metal cation: His-130 and His-160. The tract at residues 224–259 is important for dimerization; it reads YVEFNLVWDRGTIFGLQTNGRIESILMSMPPLVRWE.

Belongs to the aerobic coproporphyrinogen-III oxidase family. Homodimer. A divalent metal cation is required as a cofactor.

It is found in the cytoplasm. It catalyses the reaction coproporphyrinogen III + O2 + 2 H(+) = protoporphyrinogen IX + 2 CO2 + 2 H2O. It participates in porphyrin-containing compound metabolism; protoporphyrin-IX biosynthesis; protoporphyrinogen-IX from coproporphyrinogen-III (O2 route): step 1/1. Its function is as follows. Involved in the heme and chlorophyll biosynthesis. Catalyzes the aerobic oxidative decarboxylation of propionate groups of rings A and B of coproporphyrinogen-III to yield the vinyl groups in protoporphyrinogen-IX. This Gloeobacter violaceus (strain ATCC 29082 / PCC 7421) protein is Oxygen-dependent coproporphyrinogen-III oxidase.